Reading from the N-terminus, the 263-residue chain is Endonuclease 8 (263 aa).

Pro-2 functions as the Schiff-base intermediate with DNA in the catalytic mechanism. The active-site Proton donor is the Glu-3. The active-site Proton donor; for beta-elimination activity is Lys-53. DNA contacts are provided by Gln-70, Arg-125, and Asn-169. An FPG-type zinc finger spans residues 229–263 (KVFHRDGEPCERCGGIIEKTTLSSRPFYWCPGCQH). The Proton donor; for delta-elimination activity role is filled by Arg-253.

It belongs to the FPG family. Requires Zn(2+) as cofactor.

It carries out the reaction 2'-deoxyribonucleotide-(2'-deoxyribose 5'-phosphate)-2'-deoxyribonucleotide-DNA = a 3'-end 2'-deoxyribonucleotide-(2,3-dehydro-2,3-deoxyribose 5'-phosphate)-DNA + a 5'-end 5'-phospho-2'-deoxyribonucleoside-DNA + H(+). Involved in base excision repair of DNA damaged by oxidation or by mutagenic agents. Acts as a DNA glycosylase that recognizes and removes damaged bases. Has a preference for oxidized pyrimidines, such as thymine glycol, 5,6-dihydrouracil and 5,6-dihydrothymine. Has AP (apurinic/apyrimidinic) lyase activity and introduces nicks in the DNA strand. Cleaves the DNA backbone by beta-delta elimination to generate a single-strand break at the site of the removed base with both 3'- and 5'-phosphates. The sequence is that of Endonuclease 8 from Escherichia coli O6:K15:H31 (strain 536 / UPEC).